We begin with the raw amino-acid sequence, 783 residues long: RNA exonuclease 5 (783 aa).

In terms of domain architecture, Exonuclease spans 230-378 (LFGLDCEMCL…EDARTTLELA (149 aa)). RRM domains follow at residues 503 to 577 (STVY…RPVT) and 598 to 677 (GTIY…RHLH).

The chain is RNA exonuclease 5 (REXO5) from Bos taurus (Bovine).